The primary structure comprises 673 residues: Forkhead box protein O3 (673 aa).

Residues 1–153 (MAEAPASPAP…SGQPRKCSSR (153 aa)) are disordered. The residue at position 30 (serine 30) is a Phosphoserine; by AMPK. Threonine 32 bears the Phosphothreonine; by PKB/AKT1 mark. Lysine 46 is subject to N6-methyllysine. Acidic residues predominate over residues 57 to 68 (IPEEEDDEDDED). The span at 79–89 (IGGGGGSGTLG) shows a compositional bias: gly residues. Positions 80–108 (GGGGGSGTLGSGLLLEDSARVLAPGGQDP) are required for mitochondrial import. At lysine 149 the chain carries N6-methyllysine. A DNA-binding region (fork-head) is located at residues 157-251 (WGNLSYADLI…KSGKAPRRRA (95 aa)). Threonine 179 carries the post-translational modification Phosphothreonine; by AMPK. A Phosphoserine; by STK4/MST1 modification is found at serine 209. Phosphoserine; by MAPKAPK5 is present on serine 215. At lysine 230 the chain carries N6-methyllysine. The interval 231–302 (SSWWIINPDG…GSPTSRSSDE (72 aa)) is disordered. Lysine 242 carries the N6-acetyllysine modification. A Nuclear localization signal motif is present at residues 242–259 (KSGKAPRRRAVSMDNSNK). Serine 253 carries the phosphoserine; by PKB/AKT1 and MAPKAPK5 modification. Positions 261-272 (TKSRGRAAKKKA) are enriched in basic residues. N6-methyllysine is present on residues lysine 262 and lysine 271. A phosphoserine mark is found at serine 280 and serine 284. Positions 283–298 (DSPSQLSKWPGSPTSR) are enriched in polar residues. Lysine 290 carries the post-translational modification N6-methyllysine. Position 294 is a phosphoserine (serine 294). A Phosphoserine; by CaMK2A modification is found at serine 299. The segment at 300–673 (SDELDAWTDF…QASSQSWVPG (374 aa)) is mediates interaction with CHUK/IKKA and IKBKB/IKKB. At serine 311 the chain carries Phosphoserine. Phosphoserine; by SGK1 is present on serine 315. 2 positions are modified to phosphoserine; by AMPK: serine 399 and serine 413. The residue at position 419 (lysine 419) is an N6-methyllysine. Position 421 is a phosphoserine (serine 421). A disordered region spans residues 536–587 (HQHQTQGALGGSRALSNSVSNMGLSESSSLGSAKHQQQSPVSQSMQTLSDSL). Residues 549 to 582 (ALSNSVSNMGLSESSSLGSAKHQQQSPVSQSMQT) show a composition bias toward polar residues. Serine 551 is modified (phosphoserine; by MAPKAPK5). Serine 555 bears the Phosphoserine; by AMPK and MAPKAPK5 mark. 2 positions are modified to phosphoserine; by AMPK: serine 588 and serine 626. Serine 644 is modified (phosphoserine; by IKKB).

As to quaternary structure, upon metabolic stress, forms a complex composed of FOXO3, SIRT3 and mitochondrial RNA polymerase POLRMT; the complex is recruited to mtDNA in a SIRT3-dependent manner. Also forms a complex composed of FOXO3, SIRT3, TFAM and POLRMT. Interacts with SIRT2; the interaction occurs independently of SIRT2 deacetylase activity. Interacts with YWHAB/14-3-3-beta and YWHAZ/14-3-3-zeta, which are required for cytosolic sequestration. Upon oxidative stress, interacts with STK4/MST1, which disrupts interaction with YWHAB/14-3-3-beta and leads to nuclear translocation. Interacts with PIM1. Interacts with DDIT3/CHOP. Interacts (deacetylated form) with SKP2. Interacts with CHUK and IKBKB. Interacts with CAMK2A, CAMK2B and calcineurin A. Interacts with NUPR1; this interaction represses FOXO3 transactivation. In terms of processing, in the presence of survival factors such as IGF1, phosphorylated on Thr-32 and Ser-253 by AKT1/PKB. This phosphorylated form then interacts with 14-3-3 proteins and is retained in the cytoplasm. Survival factor withdrawal induces dephosphorylation and promotes translocation to the nucleus where the dephosphorylated protein induces transcription of target genes and triggers apoptosis. Although AKT1/PKB doesn't appear to phosphorylate Ser-315 directly, it may activate other kinases that trigger phosphorylation at this residue. Phosphorylated by STK4/MST1 on Ser-209 upon oxidative stress, which leads to dissociation from YWHAB/14-3-3-beta and nuclear translocation. Phosphorylated by PIM1. Phosphorylation by AMPK leads to the activation of transcriptional activity without affecting subcellular localization. In response to metabolic stress, phosphorylated by AMPK on Ser-30 which mediates FOXO3 mitochondrial translocation. Phosphorylation by MAPKAPK5 promotes nuclear localization and DNA-binding, leading to induction of miR-34b and miR-34c expression, 2 post-transcriptional regulators of MYC that bind to the 3'UTR of MYC transcript and prevent its translation. Phosphorylated by CHUK/IKKA and IKBKB/IKKB. TNF-induced inactivation of FOXO3 requires its phosphorylation at Ser-644 by IKBKB/IKKB which promotes FOXO3 retention in the cytoplasm, polyubiquitination and ubiquitin-mediated proteasomal degradation. May be dephosphorylated by calcineurin A on Ser-299 which abolishes FOXO3 transcriptional activity. In cancer cells, ERK mediated-phosphorylation of Ser-12 is required for mitochondrial translocation of FOXO3 in response to metabolic stress or chemotherapeutic agents. Phosphorylation at Ser-253 promotes its degradation by the proteasome. Dephosphorylation at Ser-253 by protein phosphatase 2A (PPP2CA) promotes its stabilization; interaction with PPP2CA is enhanced by AMBRA1. Post-translationally, deacetylation by SIRT1 or SIRT2 stimulates interaction of FOXO3 with SKP2 and facilitates SCF(SKP2)-mediated FOXO3 ubiquitination and proteasomal degradation. Deacetylation by SIRT2 stimulates FOXO3-mediated transcriptional activity in response to oxidative stress. Deacetylated by SIRT3. Deacetylation by SIRT3 stimulates FOXO3-mediated mtDNA transcriptional activity in response to metabolic stress. Heavily methylated by SET9 which decreases stability, while moderately increasing transcriptional activity. The main methylation site is Lys-271. Methylation doesn't affect subcellular location. In terms of processing, polyubiquitinated. Ubiquitinated by a SCF complex containing SKP2, leading to proteasomal degradation. Post-translationally, the N-terminus is cleaved following import into the mitochondrion. As to expression, ubiquitous.

The protein localises to the cytoplasm. Its subcellular location is the cytosol. It is found in the nucleus. The protein resides in the mitochondrion matrix. It localises to the mitochondrion outer membrane. In terms of biological role, transcriptional activator that recognizes and binds to the DNA sequence 5'-[AG]TAAA[TC]A-3' and regulates different processes, such as apoptosis and autophagy. Acts as a positive regulator of autophagy in skeletal muscle: in starved cells, enters the nucleus following dephosphorylation and binds the promoters of autophagy genes, such as GABARAP1L, MAP1LC3B and ATG12, thereby activating their expression, resulting in proteolysis of skeletal muscle proteins. Triggers apoptosis in the absence of survival factors, including neuronal cell death upon oxidative stress. Participates in post-transcriptional regulation of MYC: following phosphorylation by MAPKAPK5, promotes induction of miR-34b and miR-34c expression, 2 post-transcriptional regulators of MYC that bind to the 3'UTR of MYC transcript and prevent its translation. In response to metabolic stress, translocates into the mitochondria where it promotes mtDNA transcription. In response to metabolic stress, translocates into the mitochondria where it promotes mtDNA transcription. Also acts as a key regulator of chondrogenic commitment of skeletal progenitor cells in response to lipid availability: when lipids levels are low, translocates to the nucleus and promotes expression of SOX9, which induces chondrogenic commitment and suppresses fatty acid oxidation. Also acts as a key regulator of regulatory T-cells (Treg) differentiation by activating expression of FOXP3. The protein is Forkhead box protein O3 of Homo sapiens (Human).